The sequence spans 596 residues: Elongation factor 4 (596 aa).

The tr-type G domain occupies 2–184 (KHIRNFSIIA…MIVKDVPPPV (183 aa)). GTP contacts are provided by residues 14-19 (DHGKST) and 131-134 (NKID).

This sequence belongs to the TRAFAC class translation factor GTPase superfamily. Classic translation factor GTPase family. LepA subfamily.

The protein resides in the cell inner membrane. The enzyme catalyses GTP + H2O = GDP + phosphate + H(+). Required for accurate and efficient protein synthesis under certain stress conditions. May act as a fidelity factor of the translation reaction, by catalyzing a one-codon backward translocation of tRNAs on improperly translocated ribosomes. Back-translocation proceeds from a post-translocation (POST) complex to a pre-translocation (PRE) complex, thus giving elongation factor G a second chance to translocate the tRNAs correctly. Binds to ribosomes in a GTP-dependent manner. In Pseudoalteromonas translucida (strain TAC 125), this protein is Elongation factor 4.